We begin with the raw amino-acid sequence, 776 residues long: Glucocorticoid receptor (776 aa).

Over residues Met-1–Ser-11 the composition is skewed to polar residues. A disordered region spans residues Met-1–Asn-25. Residues Met-1–Phe-419 are modulating. Thr-8 is modified (phosphothreonine). An Omega-N-methylarginine modification is found at Arg-23. A phosphoserine mark is found at Ser-45, Ser-113, and Ser-134. The segment at Pro-157–Gly-178 is disordered. Positions Ser-161–Thr-174 are enriched in polar residues. 3 positions are modified to phosphoserine: Ser-203, Ser-211, and Ser-226. Lys-258 participates in a covalent cross-link: Glycyl lysine isopeptide (Lys-Gly) (interchain with G-Cter in SUMO2). Residue Ser-267 is modified to Phosphoserine. Glycyl lysine isopeptide (Lys-Gly) (interchain with G-Cter in SUMO); alternate cross-links involve residues Lys-277 and Lys-293. Glycyl lysine isopeptide (Lys-Gly) (interchain with G-Cter in SUMO2); alternate cross-links involve residues Lys-277 and Lys-293. Phosphoserine is present on residues Ser-307 and Ser-404. The segment at residues Pro-417–Thr-492 is a DNA-binding region (nuclear receptor). A Glycyl lysine isopeptide (Lys-Gly) (interchain with G-Cter in ubiquitin) cross-link involves residue Lys-418. 2 consecutive NR C4-type zinc fingers follow at residues Cys-420–Cys-440 and Cys-456–Cys-480. 4 positions are modified to N6-acetyllysine: Lys-479, Lys-491, Lys-493, and Lys-494. Residues Gly-484 to Lys-776 form an interaction with CLOCK region. The segment at Asn-486–Ala-522 is hinge. The NR LBD domain maps to Thr-523 to Thr-757. The segment at Pro-531 to Leu-696 is interaction with CRY1. Residue Lys-702 forms a Glycyl lysine isopeptide (Lys-Gly) (interchain with G-Cter in SUMO) linkage.

It belongs to the nuclear hormone receptor family. NR3 subfamily. In terms of assembly, heteromultimeric cytoplasmic complex with HSP90AA1, HSPA1A/HSPA1B, and FKBP5 or another immunophilin such as PPID, STIP1, or the immunophilin homolog PPP5C. Upon ligand binding FKBP5 dissociates from the complex and FKBP4 takes its place, thereby linking the complex to dynein and mediating transport to the nucleus, where the complex dissociates. Probably forms a complex composed of chaperones HSP90 and HSP70, co-chaperones CDC37, PPP5C, TSC1 and client protein TSC2, CDK4, AKT, RAF1 and NR3C1; this complex does not contain co-chaperones STIP1/HOP and PTGES3/p23. Directly interacts with UNC45A. Binds to DNA as a homodimer, and as heterodimer with NR3C2 or the retinoid X receptor. Binds STAT5A and STAT5B homodimers and heterodimers. Interacts with NRIP1, POU2F1, POU2F2 and TRIM28. Interacts with several coactivator complexes, including the SMARCA4 complex, CREBBP/EP300, TADA2L (Ada complex) and p160 coactivators such as NCOA2 and NCOA6. Interaction with BAG1 inhibits transactivation. Interacts with HEXIM1 and TGFB1I1. Interacts with NCOA1. Interacts with NCOA3, SMARCA4, SMARCC1, SMARCD1, and SMARCE1. Interacts with CLOCK, CRY1 and CRY2 in a ligand-dependent fashion. Interacts with CIART. Interacts with RWDD3. Interacts with UBE2I/UBC9 and this interaction is enhanced in the presence of RWDD3. Interacts with GRIP1. Interacts with NR4A3 (via nuclear receptor DNA-binding domain), represses transcription activity of NR4A3 on the POMC promoter Nur response element (NurRE). Directly interacts with PNRC2 to attract and form a complex with UPF1 and DCP1A; the interaction leads to rapid mRNA degradation. Interacts with GSK3B. Interacts with FNIP1 and FNIP2. Interacts (via C-terminus) with NR3C1 (via C-terminus). Interacts with MCM3AP. Interacts (via domain NR LBD) with HSP90AA1 and HSP90AB1. In the absence of hormonal ligand, interacts with TACC1. In terms of processing, acetylation by CLOCK reduces its binding to glucocorticoid response elements and its transcriptional activity. Post-translationally, increased proteasome-mediated degradation in response to glucocorticoids. Phosphorylated in the absence of hormone; becomes hyperphosphorylated in the presence of glucocorticoid. The Ser-203, Ser-226 and Ser-404-phosphorylated forms are mainly cytoplasmic, and the Ser-211-phosphorylated form is nuclear. Phosphorylation at Ser-211 increases transcriptional activity. Phosphorylation at Ser-203, Ser-226 and Ser-404 decreases signaling capacity. Phosphorylation at Ser-404 may protect from glucocorticoid-induced apoptosis. Phosphorylation at Ser-203 and Ser-211 is not required in regulation of chromosome segregation. May be dephosphorylated by PPP5C, attenuates NR3C1 action. In terms of processing, sumoylation at Lys-277 and Lys-293 negatively regulates its transcriptional activity. Sumoylation at Lys-702 positively regulates its transcriptional activity in the presence of RWDD3. Sumoylation at Lys-277 and Lys-293 is dispensable whereas sumoylation at Lys-702 is critical for the stimulatory effect of RWDD3 on its transcriptional activity. Heat shock increases sumoylation in a RWDD3-dependent manner. Post-translationally, ubiquitinated by UBR5, leading to its degradation: UBR5 specifically recognizes and binds ligand-bound NR3C1 when it is not associated with coactivators (NCOAs). In presence of NCOAs, the UBR5-degron is not accessible, preventing its ubiquitination and degradation.

Its subcellular location is the cytoplasm. The protein localises to the nucleus. The protein resides in the mitochondrion. It localises to the cytoskeleton. It is found in the spindle. Its subcellular location is the microtubule organizing center. The protein localises to the centrosome. The protein resides in the chromosome. It localises to the nucleoplasm. Receptor for glucocorticoids (GC). Has a dual mode of action: as a transcription factor that binds to glucocorticoid response elements (GRE), both for nuclear and mitochondrial DNA, and as a modulator of other transcription factors. Affects inflammatory responses, cellular proliferation and differentiation in target tissues. Involved in chromatin remodeling. Plays a role in rapid mRNA degradation by binding to the 5' UTR of target mRNAs and interacting with PNRC2 in a ligand-dependent manner which recruits the RNA helicase UPF1 and the mRNA-decapping enzyme DCP1A, leading to RNA decay. Could act as a coactivator for STAT5-dependent transcription upon growth hormone (GH) stimulation and could reveal an essential role of hepatic GR in the control of body growth. Mediates glucocorticoid-induced apoptosis. Promotes accurate chromosome segregation during mitosis. May act as a tumor suppressor. May play a negative role in adipogenesis through the regulation of lipolytic and antilipogenic gene expression. In Tupaia belangeri (Common tree shrew), this protein is Glucocorticoid receptor (NR3C1).